We begin with the raw amino-acid sequence, 138 residues long: Ribosome-binding factor A (138 aa).

The tract at residues 116–138 (VAQDSQHQEGPASPDAKPESTEE) is disordered.

This sequence belongs to the RbfA family. In terms of assembly, monomer. Binds 30S ribosomal subunits, but not 50S ribosomal subunits or 70S ribosomes.

It localises to the cytoplasm. Its function is as follows. One of several proteins that assist in the late maturation steps of the functional core of the 30S ribosomal subunit. Associates with free 30S ribosomal subunits (but not with 30S subunits that are part of 70S ribosomes or polysomes). Required for efficient processing of 16S rRNA. May interact with the 5'-terminal helix region of 16S rRNA. The polypeptide is Ribosome-binding factor A (Pseudomonas syringae pv. tomato (strain ATCC BAA-871 / DC3000)).